Here is a 342-residue protein sequence, read N- to C-terminus: MTDNPLLSSASQIEDQDAALRPKTLAEFVGQAGAKDNLQVFIESAKQRREAMDHVLFFGPPGLGKTTLAQIIARELGVNFRATSGPVIAKAGDLAALLTNLEHGDVLFIDEIHRLNPVVEEVLYPAMEDRALDLIIGEGPSARSVRIDLPPFTLIGATTRQGLLQTPLRDRFGIPVRLQFYSVEELERVVARGASLMGIGIDKGGATEIARRSRGTPRVAGRLLRRVRDFAQVAGAEKITQSIADNALTRLEVDKIGLDLQDRRYLTMIADIYKGGPVGVETLAAGLSEPRDTIEEVIEPYLIQLGMIARTARGRCLNDRGWQHLGLAPPSGQMPGLFGPDE.

A large ATPase domain (RuvB-L) region spans residues 2 to 181; that stretch reads TDNPLLSSAS…FGIPVRLQFY (180 aa). The ATP site is built by L20, R21, G62, K65, T66, T67, R171, Y181, and R218. T66 contacts Mg(2+). The tract at residues 182-252 is small ATPAse domain (RuvB-S); that stretch reads SVEELERVVA…IADNALTRLE (71 aa). Residues 255-342 form a head domain (RuvB-H) region; the sequence is KIGLDLQDRR…QMPGLFGPDE (88 aa). 3 residues coordinate DNA: R291, R310, and R315.

This sequence belongs to the RuvB family. In terms of assembly, homohexamer. Forms an RuvA(8)-RuvB(12)-Holliday junction (HJ) complex. HJ DNA is sandwiched between 2 RuvA tetramers; dsDNA enters through RuvA and exits via RuvB. An RuvB hexamer assembles on each DNA strand where it exits the tetramer. Each RuvB hexamer is contacted by two RuvA subunits (via domain III) on 2 adjacent RuvB subunits; this complex drives branch migration. In the full resolvosome a probable DNA-RuvA(4)-RuvB(12)-RuvC(2) complex forms which resolves the HJ.

It is found in the cytoplasm. It catalyses the reaction ATP + H2O = ADP + phosphate + H(+). The RuvA-RuvB-RuvC complex processes Holliday junction (HJ) DNA during genetic recombination and DNA repair, while the RuvA-RuvB complex plays an important role in the rescue of blocked DNA replication forks via replication fork reversal (RFR). RuvA specifically binds to HJ cruciform DNA, conferring on it an open structure. The RuvB hexamer acts as an ATP-dependent pump, pulling dsDNA into and through the RuvAB complex. RuvB forms 2 homohexamers on either side of HJ DNA bound by 1 or 2 RuvA tetramers; 4 subunits per hexamer contact DNA at a time. Coordinated motions by a converter formed by DNA-disengaged RuvB subunits stimulates ATP hydrolysis and nucleotide exchange. Immobilization of the converter enables RuvB to convert the ATP-contained energy into a lever motion, pulling 2 nucleotides of DNA out of the RuvA tetramer per ATP hydrolyzed, thus driving DNA branch migration. The RuvB motors rotate together with the DNA substrate, which together with the progressing nucleotide cycle form the mechanistic basis for DNA recombination by continuous HJ branch migration. Branch migration allows RuvC to scan DNA until it finds its consensus sequence, where it cleaves and resolves cruciform DNA. This is Holliday junction branch migration complex subunit RuvB from Novosphingobium aromaticivorans (strain ATCC 700278 / DSM 12444 / CCUG 56034 / CIP 105152 / NBRC 16084 / F199).